Here is a 473-residue protein sequence, read N- to C-terminus: Phosphatidylserine synthase 2 (473 aa).

The segment at 1 to 25 (MRRGERRVAGGSGSESPLLKGRRST) is disordered. At 1-40 (MRRGERRVAGGSGSESPLLKGRRSTESEVYDDGTNTFFWR) the chain is on the cytoplasmic side. Residues serine 12, serine 14, and serine 16 each carry the phosphoserine modification. The helical transmembrane segment at 41 to 61 (AHTLTVLFILTCALGYVTLLE) threads the bilayer. The Lumenal portion of the chain corresponds to 62–74 (ETPQDTAYNTKRG). A helical transmembrane segment spans residues 75 to 95 (IVASILVFLCFGVTQAKDGPF). Residues 96 to 104 (SRPHPAYWR) are Cytoplasmic-facing. Residues 105-125 (FWLCVSVVYELFLIFILFQTV) form a helical membrane-spanning segment. Residues 126-291 (QDGRQFLKYV…EWKPASSLHR (166 aa)) lie on the Lumenal side of the membrane. A glycan (N-linked (GlcNAc...) asparagine) is linked at asparagine 159. A helical membrane pass occupies residues 292-312 (WLAVCGIILVFLLAELNTFYL). Position 313 (lysine 313) is a topological domain, cytoplasmic. The helical transmembrane segment at 314-334 (FVLWMPPEHYLVLLRLVFFVN) threads the bilayer. At 335 to 354 (VGGVAMREIYDFMDELKPHR) the chain is on the lumenal side. The chain crosses the membrane as a helical span at residues 355–375 (KLGQQAWLVAAITVTELLIVV). The Cytoplasmic portion of the chain corresponds to 376-381 (KYDPHT). The helical transmembrane segment at 382 to 402 (LTLSLPFYISQCWTLGSILVL) threads the bilayer. Residues 403-473 (TWTVWRFFLR…TAEEGTSAAS (71 aa)) lie on the Lumenal side of the membrane. A disordered region spans residues 422–473 (RRQKQQSHQARAVNNRDGHPGPDDDLLGTGTAEEEGTTNDGVTAEEGTSAAS).

The protein belongs to the phosphatidyl serine synthase family. As to expression, highly expressed in testis. Detected at lower levels in kidney and heart.

It localises to the endoplasmic reticulum membrane. The protein localises to the membrane. It catalyses the reaction a 1,2-diacyl-sn-glycero-3-phosphoethanolamine + L-serine = a 1,2-diacyl-sn-glycero-3-phospho-L-serine + ethanolamine. The catalysed reaction is 1-hexadecanoyl-2-(9Z-octadecenoyl)-sn-glycero-3-phosphoethanolamine + L-serine = 1-hexadecanoyl-2-(9Z-octadecenoyl)-sn-glycero-3-phospho-L-serine + ethanolamine. The enzyme catalyses 1-hexadecanoyl-2-(4Z,7Z,10Z,13Z,16Z,19Z-docosahexaenoyl)-sn-glycero-3-phosphoethanolamine + L-serine = 1-hexadecanoyl-2-(4Z,7Z,10Z,13Z,16Z,19Z-docosahexaenoyl)-sn-glycero-3-phosphoserine + ethanolamine. It carries out the reaction 1-octadecanoyl-2-(5Z,8Z,11Z,14Z)-eicosatetraenoyl-sn-glycero-3-phosphoethanolamine + L-serine = 1-octadecanoyl-2-(5Z,8Z,11Z,14Z)-eicosatetraenoyl-sn-glycero-3-phosphoserine + ethanolamine. It catalyses the reaction 1-octadecanoyl-2-(4Z,7Z,10Z,13Z,16Z,19Z-docosahexaenoyl)-sn-glycero-3-phosphoethanolamine + L-serine = 1-octadecanoyl-2-(4Z,7Z,10Z,13Z,16Z,19Z-docosahexaenoyl)-sn-glycero-3-phosphoserine + ethanolamine. The catalysed reaction is 1-(1Z-octadecenyl)-2-(4Z,7Z,10Z,13Z,16Z,19Z-docosahexaenoyl)-sn-glycero-3-phosphoethanolamine + L-serine = 1-(1Z-octadecenyl)-2-(4Z,7Z,10Z,13Z,16Z,19Z-docosahexaenoyl)-sn-glycero-3-phospho-L-serine + ethanolamine. The enzyme catalyses 1-octadecanoyl-2-(9Z-octadecenoyl)-sn-glycero-3-phosphoethanolamine + L-serine = 1-octadecanoyl-2-(9Z-octadecenoyl)-sn-glycero-3-phospho-L-serine + ethanolamine. It carries out the reaction 1-(1Z-octadecenyl)-2-(9Z-octadecenoyl)-sn-glycero-3-phosphoethanolamine + L-serine = 1-(1Z-octadecenyl)-2-(9Z-octadecenoyl)-sn-glycero-3-phospho-L-serine + ethanolamine. It catalyses the reaction 1-(1Z-octadecenyl)-2-(5Z,8Z,11Z,14Z- eicosatetraenoyl)-sn-glycero-3-phosphoethanolamine + L-serine = 1-(1Z-octadecenyl)-2-(5Z,8Z,11Z,14Z-eicosatetraenoyl)-sn-glycero-3-phospho-L-serine + ethanolamine. The protein operates within phospholipid metabolism; phosphatidylserine biosynthesis. Its activity is regulated as follows. Almost complete inhibition by ethanolamine in both the mitochondria-associated membrane (MAM) and endoplasmic reticulum (ER) per se. Functionally, catalyzes a base-exchange reaction in which the polar head group of phosphatidylethanolamine (PE) or phosphatidylcholine (PC) is replaced by L-serine. Catalyzes the conversion of phosphatatidylethanolamine and does not act on phosphatidylcholine. Can utilize both phosphatidylethanolamine (PE) plasmalogen and diacyl PE as substrate and the latter is six times better utilized, indicating the importance of an ester linkage at the sn-1 position. Although it shows no sn-1 fatty acyl preference, exhibits significant preference towards docosahexaenoic acid (22:6n-3) compared with 18:1 or 20:4 at the sn-2 position. The chain is Phosphatidylserine synthase 2 (Ptdss2) from Mus musculus (Mouse).